The primary structure comprises 462 residues: MEVKKTMEKIVALAKNRGFIYPGSEIYGGLANSWDYGPLGVELKNNIKKAWWKKFVQENPYNVGVDCAILMNPQVWVASGHVGGFSDPLIDCKECKTRHRADKMIEEWNLKNNENVKVDGWSNEMLMNYIREKGVTCPECGGKNFTDIRKFNLMFKTFQGVTEDSKSEIYLRPETAQGIFVNFKNVQRTTRKKIPFGIGQIGKSFRNEITPGNFIFRTREFEQMELEFFCEPGTDLEWFEYWKNFCFNWLLSLNIKKENLRMRDHSKEELSHYSNATTDIEYLFPFGWGELWGIADRTDFDLRQHAEHSKEDLSYFDPNTNRKYIPYCIEPSLGADRVALVFLCDAYDEEEVEEGDIRVVLRFHPAIAPVKIAVLPLSKKLGDEAYKIYEMLIKKYNCEYDETGSIGKRYRRQDEIGTPYCVTFDFDSLNDRCVTVRDRDSMQQVRIKIDELLSYFEGKFDF.

Arginine 100 and glutamate 174 together coordinate substrate. Residues arginine 206 to glutamate 208, phenylalanine 216 to phenylalanine 221, glutamate 290 to leucine 291, and glycine 334 to arginine 337 each bind ATP. Phenylalanine 221 to glutamate 225 serves as a coordination point for substrate. Glutamate 330–glycine 334 contacts substrate.

The protein belongs to the class-II aminoacyl-tRNA synthetase family. Homodimer.

The protein resides in the cytoplasm. The catalysed reaction is tRNA(Gly) + glycine + ATP = glycyl-tRNA(Gly) + AMP + diphosphate. Catalyzes the attachment of glycine to tRNA(Gly). This is Glycine--tRNA ligase from Acetivibrio thermocellus (strain ATCC 27405 / DSM 1237 / JCM 9322 / NBRC 103400 / NCIMB 10682 / NRRL B-4536 / VPI 7372) (Clostridium thermocellum).